Here is a 178-residue protein sequence, read N- to C-terminus: Transcription factor E (178 aa).

Positions 5-89 constitute an HTH TFE/IIEalpha-type domain; that stretch reads AEELILSLAK…YWKVNIDQIN (85 aa).

It belongs to the TFE family. Monomer. Interaction with RNA polymerase subunits RpoF and RpoE is necessary for Tfe stimulatory transcription activity. Able to interact with Tbp and RNA polymerase in the absence of DNA promoter. Interacts both with the preinitiation and elongation complexes.

Functionally, transcription factor that plays a role in the activation of archaeal genes transcribed by RNA polymerase. Facilitates transcription initiation by enhancing TATA-box recognition by TATA-box-binding protein (Tbp), and transcription factor B (Tfb) and RNA polymerase recruitment. Not absolutely required for transcription in vitro, but particularly important in cases where Tbp or Tfb function is not optimal. It dynamically alters the nucleic acid-binding properties of RNA polymerases by stabilizing the initiation complex and destabilizing elongation complexes. Seems to translocate with the RNA polymerase following initiation and acts by binding to the non template strand of the transcription bubble in elongation complexes. This chain is Transcription factor E, found in Sulfurisphaera tokodaii (strain DSM 16993 / JCM 10545 / NBRC 100140 / 7) (Sulfolobus tokodaii).